The primary structure comprises 284 residues: MTVRKPEWLKVRILSEDLNRMEAFLKNMALNTVCQSANCPNMGECFARRTATFMIMGNICTRNCRFCAVEKGHPQPLDEEEPRRVAEAARRLGLRHVVVTSVTRDDLPDGGASHFAKTIYELKKLPGVTVEVLVPDFMGNEEAIRTVVEAKPDVINHNVETVPRLYSRVRPKADYIRSLNLLKKVKELDPLILTKSGIMVGLGETEEEVIEVMKDLRDIDCDMMTIGQYLRPSHKHIEVAEYVTPEQFKRYEEIGYKLGFKHVASGPLVRSSYHADVGLSLARG.

Positions 34, 39, 45, 60, 64, 67, and 272 each coordinate [4Fe-4S] cluster. Residues 46-261 (FARRTATFMI…EEIGYKLGFK (216 aa)) form the Radical SAM core domain.

It belongs to the radical SAM superfamily. Lipoyl synthase family. [4Fe-4S] cluster is required as a cofactor.

The protein localises to the cytoplasm. The catalysed reaction is [[Fe-S] cluster scaffold protein carrying a second [4Fe-4S](2+) cluster] + N(6)-octanoyl-L-lysyl-[protein] + 2 oxidized [2Fe-2S]-[ferredoxin] + 2 S-adenosyl-L-methionine + 4 H(+) = [[Fe-S] cluster scaffold protein] + N(6)-[(R)-dihydrolipoyl]-L-lysyl-[protein] + 4 Fe(3+) + 2 hydrogen sulfide + 2 5'-deoxyadenosine + 2 L-methionine + 2 reduced [2Fe-2S]-[ferredoxin]. The protein operates within protein modification; protein lipoylation via endogenous pathway; protein N(6)-(lipoyl)lysine from octanoyl-[acyl-carrier-protein]: step 2/2. Functionally, catalyzes the radical-mediated insertion of two sulfur atoms into the C-6 and C-8 positions of the octanoyl moiety bound to the lipoyl domains of lipoate-dependent enzymes, thereby converting the octanoylated domains into lipoylated derivatives. The chain is Lipoyl synthase from Caldanaerobacter subterraneus subsp. tengcongensis (strain DSM 15242 / JCM 11007 / NBRC 100824 / MB4) (Thermoanaerobacter tengcongensis).